The sequence spans 595 residues: Apolipoprotein N-acyltransferase 2 (595 aa).

5 consecutive transmembrane segments (helical) span residues 30–50, 63–83, 95–115, 167–187, and 210–230; these read FLAF…FGFF, LFFH…HWII, VVAI…FPIF, AEIT…YTLF, and FITL…FLFK. The CN hydrolase domain occupies 241 to 555; that stretch reads LNVLIVQPDA…AEALSETIDV (315 aa). Glutamate 293 (proton acceptor) is an active-site residue. Lysine 372 is an active-site residue. The active-site Nucleophile is the cysteine 463. Residues 569–589 form a helical membrane-spanning segment; the sequence is LIPWLMLFLTGIYYLNLLIGI.

It belongs to the CN hydrolase family. Apolipoprotein N-acyltransferase subfamily.

The protein resides in the cell inner membrane. It carries out the reaction N-terminal S-1,2-diacyl-sn-glyceryl-L-cysteinyl-[lipoprotein] + a glycerophospholipid = N-acyl-S-1,2-diacyl-sn-glyceryl-L-cysteinyl-[lipoprotein] + a 2-acyl-sn-glycero-3-phospholipid + H(+). It functions in the pathway protein modification; lipoprotein biosynthesis (N-acyl transfer). Catalyzes the phospholipid dependent N-acylation of the N-terminal cysteine of apolipoprotein, the last step in lipoprotein maturation. The protein is Apolipoprotein N-acyltransferase 2 of Leptospira interrogans serogroup Icterohaemorrhagiae serovar Lai (strain 56601).